The following is a 506-amino-acid chain: Glutamate--tRNA ligase (506 aa).

Positions 24–34 (PSPTGLQHIGG) match the 'HIGH' region motif. Residues Cys-121, Cys-123, Cys-148, and His-150 each contribute to the Zn(2+) site. Residues 266-270 (KLSKR) carry the 'KMSKS' region motif. Lys-269 is an ATP binding site.

This sequence belongs to the class-I aminoacyl-tRNA synthetase family. Glutamate--tRNA ligase type 1 subfamily. Monomer. Zn(2+) is required as a cofactor.

The protein resides in the cytoplasm. The enzyme catalyses tRNA(Glu) + L-glutamate + ATP = L-glutamyl-tRNA(Glu) + AMP + diphosphate. Its function is as follows. Catalyzes the attachment of glutamate to tRNA(Glu) in a two-step reaction: glutamate is first activated by ATP to form Glu-AMP and then transferred to the acceptor end of tRNA(Glu). This chain is Glutamate--tRNA ligase, found in Borrelia recurrentis (strain A1).